Here is a 377-residue protein sequence, read N- to C-terminus: Carboxynorspermidine/carboxyspermidine decarboxylase (377 aa).

An N6-(pyridoxal phosphate)lysine modification is found at Lys41. 2 residues coordinate substrate: Glu238 and Asp274.

The protein belongs to the Orn/Lys/Arg decarboxylase class-II family. NspC subfamily. As to quaternary structure, homodimer. Pyridoxal 5'-phosphate is required as a cofactor.

It is found in the cytoplasm. It catalyses the reaction carboxynorspermidine + H(+) = norspermidine + CO2. The enzyme catalyses carboxyspermidine + H(+) = spermidine + CO2. With respect to regulation, dithiothreitol greatly stimulates activity, maximum stimulation being at 5-20 mM dithiothreitol concentration. Fe(3+), Fe(2+) and Mn(2+) severely inhibit activity (88%, 82% and 50%, respectively), whereas Zn(2+) has a slightly inhibitory effect (23%) and Mg(2+), Ca(2+), Cu(2+) and Cu(+) have no effect. Its function is as follows. Catalyzes the decarboxylation of carboxynorspermidine and carboxyspermidine. 2,3-diaminopropionic acid, 2,4-diaminobutyric acid, L-ornithine or L-lysine cannot serve as substrates. The protein is Carboxynorspermidine/carboxyspermidine decarboxylase of Vibrio alginolyticus.